Reading from the N-terminus, the 451-residue chain is 3-phosphoshikimate 1-carboxyvinyltransferase (451 aa).

Residues lysine 30, serine 31, and arginine 35 each contribute to the 3-phosphoshikimate site. Lysine 30 contributes to the phosphoenolpyruvate binding site. Positions 101 and 130 each coordinate phosphoenolpyruvate. Residues serine 176, serine 177, glutamine 178, aspartate 321, and lysine 348 each coordinate 3-phosphoshikimate. Glutamine 178 contacts phosphoenolpyruvate. The active-site Proton acceptor is aspartate 321. Phosphoenolpyruvate-binding residues include arginine 352 and glutamine 422.

This sequence belongs to the EPSP synthase family. In terms of assembly, monomer.

The protein resides in the cytoplasm. It carries out the reaction 3-phosphoshikimate + phosphoenolpyruvate = 5-O-(1-carboxyvinyl)-3-phosphoshikimate + phosphate. The protein operates within metabolic intermediate biosynthesis; chorismate biosynthesis; chorismate from D-erythrose 4-phosphate and phosphoenolpyruvate: step 6/7. Its function is as follows. Catalyzes the transfer of the enolpyruvyl moiety of phosphoenolpyruvate (PEP) to the 5-hydroxyl of shikimate-3-phosphate (S3P) to produce enolpyruvyl shikimate-3-phosphate and inorganic phosphate. In Burkholderia pseudomallei (strain K96243), this protein is 3-phosphoshikimate 1-carboxyvinyltransferase.